A 201-amino-acid polypeptide reads, in one-letter code: 3-isopropylmalate dehydratase small subunit (201 aa).

Belongs to the LeuD family. LeuD type 1 subfamily. As to quaternary structure, heterodimer of LeuC and LeuD.

It catalyses the reaction (2R,3S)-3-isopropylmalate = (2S)-2-isopropylmalate. The protein operates within amino-acid biosynthesis; L-leucine biosynthesis; L-leucine from 3-methyl-2-oxobutanoate: step 2/4. Its function is as follows. Catalyzes the isomerization between 2-isopropylmalate and 3-isopropylmalate, via the formation of 2-isopropylmaleate. In Cereibacter sphaeroides (strain KD131 / KCTC 12085) (Rhodobacter sphaeroides), this protein is 3-isopropylmalate dehydratase small subunit.